The sequence spans 358 residues: Protein ttm-2 (358 aa).

The protein belongs to the arrestin family.

Functionally, involved in resistance to B.thuringiensis pore-forming toxin Cry5B downstream of the sek-1 and pmk-1 MAPK kinase pathway. In Caenorhabditis elegans, this protein is Protein ttm-2.